A 99-amino-acid polypeptide reads, in one-letter code: High mobility group nucleosome-binding domain-containing protein 3 (99 aa).

Basic and acidic residues-rich tracts occupy residues 1–25 (MPKRKSPENTEGKDGTKLTKQEPTR) and 39–53 (PESKPRKTSAKKEPG). Residues 1–99 (MPKRKSPENT…RTESIEKEGE (99 aa)) form a disordered region. S6 is subject to Phosphoserine. Residue T10 is modified to Phosphothreonine. Phosphoserine occurs at positions 78 and 93. The span at 83–99 (TKVEEAQRTESIEKEGE) shows a compositional bias: basic and acidic residues.

The protein belongs to the HMGN family. As to quaternary structure, interacts with the ligand binding domain of the thyroid receptor (TR) (in vitro). Requires the presence of thyroid hormone for its interaction. Interacts with transcriptional regulator SEHBP. Interacts with nucleosomes. As to expression, expressed in the brain, eye, prostate, thyroid, kidney, testis, glial cells and insulin-producing cells of the Langerhans pancreatic islets. In the brain, expressed in the lateral olfactory tract, anterior commissure, corpus callosum, internal capsule, fornix, stria medullans, optic tract, axon bundles, Purkinje cell layer and granular layer of the cerebellum. In retina, expressed in the nuclei of cells in the inner nuclear layer including amacrine, bipolar and horizontal neurons and in the nuclei of ganglion neurons. Detected at low levels in the liver.

Its subcellular location is the nucleus. Binds to nucleosomes, regulating chromatin structure and consequently, chromatin-dependent processes such as transcription, DNA replication and DNA repair. Affects both insulin and glucagon levels and modulates the expression of pancreatic genes involved in insulin secretion. Regulates the expression of the glucose transporter SLC2A2 by binding specifically to its promoter region and recruiting PDX1 and additional transcription factors. Regulates the expression of SLC6A9, a glycine transporter which regulates the glycine concentration in synaptic junctions in the central nervous system, by binding to its transcription start site. May play a role in ocular development and astrocyte function. This Mus musculus (Mouse) protein is High mobility group nucleosome-binding domain-containing protein 3 (Hmgn3).